Here is a 423-residue protein sequence, read N- to C-terminus: Histidinol dehydrogenase (423 aa).

Residues tyrosine 116, glutamine 177, and asparagine 200 each contribute to the NAD(+) site. Positions 223, 245, and 248 each coordinate substrate. 2 residues coordinate Zn(2+): glutamine 245 and histidine 248. Residues glutamate 313 and histidine 314 each act as proton acceptor in the active site. Substrate-binding residues include histidine 314, aspartate 347, glutamate 401, and histidine 406. Aspartate 347 contributes to the Zn(2+) binding site. Residue histidine 406 participates in Zn(2+) binding.

The protein belongs to the histidinol dehydrogenase family. Zn(2+) is required as a cofactor.

It carries out the reaction L-histidinol + 2 NAD(+) + H2O = L-histidine + 2 NADH + 3 H(+). The protein operates within amino-acid biosynthesis; L-histidine biosynthesis; L-histidine from 5-phospho-alpha-D-ribose 1-diphosphate: step 9/9. Functionally, catalyzes the sequential NAD-dependent oxidations of L-histidinol to L-histidinaldehyde and then to L-histidine. The sequence is that of Histidinol dehydrogenase from Staphylococcus saprophyticus subsp. saprophyticus (strain ATCC 15305 / DSM 20229 / NCIMB 8711 / NCTC 7292 / S-41).